The primary structure comprises 396 residues: Probable tRNA sulfurtransferase (396 aa).

The 104-residue stretch at 63–166 folds into the THUMP domain; the sequence is AAAARASARV…GRRAYFFDTI (104 aa). Residues 184–185, R266, G288, and Q297 each bind ATP; that span reads LY.

Belongs to the ThiI family.

Its subcellular location is the cytoplasm. The catalysed reaction is [ThiI sulfur-carrier protein]-S-sulfanyl-L-cysteine + a uridine in tRNA + 2 reduced [2Fe-2S]-[ferredoxin] + ATP + H(+) = [ThiI sulfur-carrier protein]-L-cysteine + a 4-thiouridine in tRNA + 2 oxidized [2Fe-2S]-[ferredoxin] + AMP + diphosphate. It catalyses the reaction [ThiS sulfur-carrier protein]-C-terminal Gly-Gly-AMP + S-sulfanyl-L-cysteinyl-[cysteine desulfurase] + AH2 = [ThiS sulfur-carrier protein]-C-terminal-Gly-aminoethanethioate + L-cysteinyl-[cysteine desulfurase] + A + AMP + 2 H(+). It participates in cofactor biosynthesis; thiamine diphosphate biosynthesis. In terms of biological role, catalyzes the ATP-dependent transfer of a sulfur to tRNA to produce 4-thiouridine in position 8 of tRNAs, which functions as a near-UV photosensor. Also catalyzes the transfer of sulfur to the sulfur carrier protein ThiS, forming ThiS-thiocarboxylate. This is a step in the synthesis of thiazole, in the thiamine biosynthesis pathway. The sulfur is donated as persulfide by IscS. The chain is Probable tRNA sulfurtransferase from Aeropyrum pernix (strain ATCC 700893 / DSM 11879 / JCM 9820 / NBRC 100138 / K1).